The primary structure comprises 88 residues: RNA-binding protein Hfq (88 aa).

One can recognise a Sm domain in the interval 9–68 (DPFLNALRCERIPVSIYLVNGIKLQGQIESFDQFVILLKNTVNQMVYKHAISTVVPARAV). The interval 66 to 88 (RAVSHHTASDRPQGERPQETTEE) is disordered. The segment covering 72–88 (TASDRPQGERPQETTEE) has biased composition (basic and acidic residues).

The protein belongs to the Hfq family. As to quaternary structure, homohexamer.

In terms of biological role, RNA chaperone that binds small regulatory RNA (sRNAs) and mRNAs to facilitate mRNA translational regulation in response to envelope stress, environmental stress and changes in metabolite concentrations. Also binds with high specificity to tRNAs. The polypeptide is RNA-binding protein Hfq (Aliivibrio salmonicida (strain LFI1238) (Vibrio salmonicida (strain LFI1238))).